Consider the following 730-residue polypeptide: Jacalin-related lectin 5 (730 aa).

In terms of domain architecture, Jacalin-type lectin 1 spans 1–126 (MSWDDGKHTK…LNSIDAHFAP (126 aa)). Residues 121-450 (DAHFAPAPPP…GNQWDDGTDH (330 aa)) form a disordered region. Composition is skewed to low complexity over residues 138 to 153 (GASGIGSDSGSIGSAG), 168 to 179 (AGGSKPSSGSAG), 196 to 207 (AGGSKPSSGSAG), and 248 to 261 (TEKNAGGSKSSSGS). Positions 275–307 (ETVSNIGDTESNAGGSKSNDGANNGASGIESNA) are enriched in polar residues. Over residues 314-323 (FGAGGTGGIG) the composition is skewed to gly residues. Low complexity predominate over residues 343 to 358 (DGASGIGSNDGSTGTN). 2 stretches are compositionally biased toward polar residues: residues 366–375 (DSNIEGTENN) and 388–416 (IGNSDGSTGTSPEGTESNADGTKTNTGGK). The segment covering 417 to 429 (ESNTGSESNTNSS) has biased composition (low complexity). Jacalin-type lectin domains follow at residues 430-572 (PQKL…YFVP) and 584-727 (PNKV…YFIP).

The protein belongs to the jacalin lectin family.

The polypeptide is Jacalin-related lectin 5 (JAL5) (Arabidopsis thaliana (Mouse-ear cress)).